A 564-amino-acid polypeptide reads, in one-letter code: Pachytene checkpoint protein 2 (564 aa).

Position 314–321 (314–321 (GPPGTGKT)) interacts with ATP.

It belongs to the AAA ATPase family. PCH2 subfamily.

The protein localises to the nucleus. The protein resides in the nucleolus. It localises to the chromosome. Functionally, required for the pachytene checkpoint, the meiotic checkpoint that prevents chromosome segregation when defects in recombination and synaptonemal complex formation occurred. Represses meiotic recombination in the rDNA, probably by excluding the meiosis-specific protein HOP1 from the nucleolar region. This chain is Pachytene checkpoint protein 2 (PCH2), found in Saccharomyces cerevisiae (strain ATCC 204508 / S288c) (Baker's yeast).